A 563-amino-acid chain; its full sequence is DNA mismatch repair protein MutL (563 aa).

This sequence belongs to the DNA mismatch repair MutL/HexB family.

Functionally, this protein is involved in the repair of mismatches in DNA. It is required for dam-dependent methyl-directed DNA mismatch repair. May act as a 'molecular matchmaker', a protein that promotes the formation of a stable complex between two or more DNA-binding proteins in an ATP-dependent manner without itself being part of a final effector complex. This chain is DNA mismatch repair protein MutL, found in Trichormus variabilis (strain ATCC 29413 / PCC 7937) (Anabaena variabilis).